Here is a 472-residue protein sequence, read N- to C-terminus: Protein nucleotidyltransferase YdiU (472 aa).

8 residues coordinate ATP: glycine 86, glycine 88, arginine 89, lysine 109, aspartate 121, glycine 122, arginine 172, and arginine 179. Catalysis depends on aspartate 244, which acts as the Proton acceptor. Residues asparagine 245 and aspartate 254 each contribute to the Mg(2+) site. Aspartate 254 provides a ligand contact to ATP.

It belongs to the SELO family. It depends on Mg(2+) as a cofactor. Mn(2+) serves as cofactor.

It carries out the reaction L-seryl-[protein] + ATP = 3-O-(5'-adenylyl)-L-seryl-[protein] + diphosphate. The enzyme catalyses L-threonyl-[protein] + ATP = 3-O-(5'-adenylyl)-L-threonyl-[protein] + diphosphate. It catalyses the reaction L-tyrosyl-[protein] + ATP = O-(5'-adenylyl)-L-tyrosyl-[protein] + diphosphate. The catalysed reaction is L-histidyl-[protein] + UTP = N(tele)-(5'-uridylyl)-L-histidyl-[protein] + diphosphate. It carries out the reaction L-seryl-[protein] + UTP = O-(5'-uridylyl)-L-seryl-[protein] + diphosphate. The enzyme catalyses L-tyrosyl-[protein] + UTP = O-(5'-uridylyl)-L-tyrosyl-[protein] + diphosphate. In terms of biological role, nucleotidyltransferase involved in the post-translational modification of proteins. It can catalyze the addition of adenosine monophosphate (AMP) or uridine monophosphate (UMP) to a protein, resulting in modifications known as AMPylation and UMPylation. The sequence is that of Protein nucleotidyltransferase YdiU from Ruegeria pomeroyi (strain ATCC 700808 / DSM 15171 / DSS-3) (Silicibacter pomeroyi).